Consider the following 103-residue polypeptide: Small ribosomal subunit protein uS10 (103 aa).

Belongs to the universal ribosomal protein uS10 family. As to quaternary structure, part of the 30S ribosomal subunit.

In terms of biological role, involved in the binding of tRNA to the ribosomes. The sequence is that of Small ribosomal subunit protein uS10 from Cutibacterium acnes (strain DSM 16379 / KPA171202) (Propionibacterium acnes).